The sequence spans 1073 residues: Probable cellulose synthase A catalytic subunit 2 [UDP-forming] (1073 aa).

The Cytoplasmic segment spans residues 1–270 (MDGAKSGKQC…SSSRINPYRM (270 aa)). Residues Cys13, Cys16, Cys32, Cys35, Cys40, Cys43, Cys55, and Cys58 each coordinate Zn(2+). The RING-type; degenerate zinc finger occupies 13-59 (CQICGDGVGTAADGELFTACDVCGFPVCRPCYEYERKDGSQACPQCK). Positions 66–98 (KGSPPILGDESDDVDADDASDVNYPTSGNQDHK) are disordered. A compositionally biased stretch (acidic residues) spans 74–85 (DESDDVDADDAS). The helical transmembrane segment at 271 to 291 (VIVLRLIVLCIFLHYRITNPV) threads the bilayer. The Extracellular segment spans residues 292–293 (RN). A helical membrane pass occupies residues 294-314 (AYPLWLLSVICEIWFALSWIL). Over 315–856 (DQFPKWSPIN…INTTIYPLTS (542 aa)) the chain is Cytoplasmic. UDP-alpha-D-glucose contacts are provided by Ser353, Lys359, Glu360, and Asp389. Asp389 is a catalytic residue. Residues 443–470 (VKDRRAMKREYEEFKVRVNALVAKAQKV) are a coiled coil. Lys530 is a binding site for UDP-alpha-D-glucose. The Mn(2+) site is built by Lys531 and Asp555. The disordered stretch occupies residues 655-676 (GGRKKTKKSKEKSTEKKKSHKH). Asp773 is an active-site residue. A helical transmembrane segment spans residues 857-877 (IPLLLYCILPAICLLTGKFII). Residues 878–882 (PEISN) lie on the Extracellular side of the membrane. A helical transmembrane segment spans residues 883–903 (FASIWFISLFLSIFATGILEM). Residues 904–918 (RWSGVGIDEWWRNEQ) lie on the Cytoplasmic side of the membrane. The helical transmembrane segment at 919–939 (FWVIGGISAHLFAVFQGLLKV) threads the bilayer. At 940–969 (LAGIDTSFTVTSKASDEEGDFAELYMFKWT) the chain is on the extracellular side. Residues 970–990 (TLLIPPTTILIINLVGVVAGI) traverse the membrane as a helical segment. Over 991–1001 (SYAINSGYQSW) the chain is Cytoplasmic. A helical membrane pass occupies residues 1002–1022 (GPLFGKLFFAFWVIVHLYPFL). The Extracellular portion of the chain corresponds to 1023–1031 (KGLMGRQNR). The helical transmembrane segment at 1032 to 1052 (TPTIVVVWAILLASIFSLLWV) threads the bilayer. Residues 1053–1073 (RIDPFTTRVTGPDTQKCGINC) lie on the Cytoplasmic side of the membrane.

Belongs to the glycosyltransferase 2 family. Plant cellulose synthase subfamily. The cofactor is Mn(2+). Zn(2+) serves as cofactor.

The protein localises to the cell membrane. The catalysed reaction is [(1-&gt;4)-beta-D-glucosyl](n) + UDP-alpha-D-glucose = [(1-&gt;4)-beta-D-glucosyl](n+1) + UDP + H(+). It functions in the pathway glycan metabolism; plant cellulose biosynthesis. Its function is as follows. Probable catalytic subunit of cellulose synthase terminal complexes ('rosettes'), required for beta-1,4-glucan microfibril crystallization, a major mechanism of the cell wall formation. In Oryza sativa subsp. japonica (Rice), this protein is Probable cellulose synthase A catalytic subunit 2 [UDP-forming] (CESA2).